The following is a 616-amino-acid chain: Chaperone protein DnaK (616 aa).

Threonine 175 carries the phosphothreonine; by autocatalysis modification. The tract at residues 579 to 616 (GGDPSQAGGFDPNAAGGAQQEPHDDNVVDADFKVDDDK) is disordered. Residues 599-616 (EPHDDNVVDADFKVDDDK) show a composition bias toward basic and acidic residues.

This sequence belongs to the heat shock protein 70 family.

Its function is as follows. Acts as a chaperone. The polypeptide is Chaperone protein DnaK (Clostridium botulinum (strain Eklund 17B / Type B)).